The following is an 832-amino-acid chain: MRGMLPLFEPKGRVLLVDGHHLAYRTFHALKGLTTSRGEPVQAVYGFAKSLLKALKEDGDAVIVVFDAKAPSFRHEAYGGYKAGRAPTPEDFPRQLALIKELVDLLGLARLEVPGYEADDVLASLAKKAEKEGYEVRILTADKDLYQLLSDRIHVLHPEGYLITPAWLWEKYGLRPDQWADYRALTGDESDNLPGVKGIGEKTARKLLEEWGSLEALLKNLDRLKPAIREKILAHMDDLKLSWDLAKVRTDLPLEVDFAKRREPDRERLRAFLERLEFGSLLHEFGLLESPKALEEAPWPPPEGAFVGFVLSRKEPMWADLLALAAARGGRVHRAPEPYKALRDLKEARGLLAKDLSVLALREGLGLPPGDDPMLLAYLLDPSNTTPEGVARRYGGEWTEEAGERAALSERLFANLWGRLEGEERLLWLYREVERPLSAVLAHMEATGVRLDVAYLRALSLEVAEEIARLEAEVFRLAGHPFNLNSRDQLERVLFDELGLPAIGKTEKTGKRSTSAAVLEALREAHPIVEKILQYRELTKLKSTYIDPLPDLIHPRTGRLHTRFNQTATATGRLSSSDPNLQNIPVRTPLGQRIRRAFIAEEGWLLVALDYSQIELRVLAHLSGDENLIRVFQEGRDIHTETASWMFGVPREAVDPLMRRAAKTINFGVLYGMSAHRLSQELAIPYEEAQAFIERYFQSFPKVRAWIEKTLEEGRRRGYVETLFGRRRYVPDLEARVKSVREAAERMAFNMPVQGTAADLMKLAMVKLFPRLEEMGARMLLQVHDELVLEAPKERAEAVARLAKEVMEGVYPLAVPLEVEVGIGEDWLSAKE.

In terms of domain architecture, 5'-3' exonuclease spans 175–260 (RPDQWADYRA…DLPLEVDFAK (86 aa)). Residues 410 to 832 (ERLFANLWGR…IGEDWLSAKE (423 aa)) form a polymerase region.

The protein belongs to the DNA polymerase type-A family.

It catalyses the reaction DNA(n) + a 2'-deoxyribonucleoside 5'-triphosphate = DNA(n+1) + diphosphate. In terms of biological role, in addition to polymerase activity, this DNA polymerase exhibits 5'-3' exonuclease activity. Unlikely to have 3'-5' exonuclease activity due to absence of a 3'-5' exonuclease domain. This Thermus aquaticus protein is DNA polymerase I, thermostable (polA).